The chain runs to 865 residues: Chitin synthase 3 (865 aa).

The disordered stretch occupies residues Met1–Ser59. The span at Pro23–Leu34 shows a compositional bias: basic and acidic residues. A compositionally biased stretch (polar residues) spans His36–Tyr45. 3 N-linked (GlcNAc...) asparagine glycosylation sites follow: Asn64, Asn95, and Asn538. A run of 3 helical transmembrane segments spans residues Phe565–Leu585, Ile620–Ala640, and Val650–Ser670. A glycan (N-linked (GlcNAc...) asparagine) is linked at Asn682. 3 helical membrane-spanning segments follow: residues Ile707 to Met727, Ser735 to Phe755, and Leu837 to Leu857.

It belongs to the chitin synthase family. Class III subfamily.

It is found in the cell membrane. It carries out the reaction [(1-&gt;4)-N-acetyl-beta-D-glucosaminyl](n) + UDP-N-acetyl-alpha-D-glucosamine = [(1-&gt;4)-N-acetyl-beta-D-glucosaminyl](n+1) + UDP + H(+). In terms of biological role, polymerizes chitin, a structural polymer of the cell wall and septum, by transferring the sugar moiety of UDP-GlcNAc to the non-reducing end of the growing chitin polymer. Is not only stable at different pH, but is also able to tolerate a broad temperature range. With CHS2, plays an important role in virulence. This chain is Chitin synthase 3, found in Exophiala dermatitidis (strain ATCC 34100 / CBS 525.76 / NIH/UT8656) (Black yeast).